A 696-amino-acid polypeptide reads, in one-letter code: Translation initiation factor IF-2 (696 aa).

Residues 187–361 enclose the tr-type G domain; the sequence is ERPPVVTVMG…EMQEIKGIPD (175 aa). The tract at residues 196-203 is G1; it reads GHVDHGKT. 196–203 contributes to the GTP binding site; the sequence is GHVDHGKT. A G2 region spans residues 221 to 225; it reads GITQS. The segment at 242 to 245 is G3; sequence DTPG. GTP-binding positions include 242 to 246 and 296 to 299; these read DTPGH and NKID. The tract at residues 296–299 is G4; sequence NKID. Residues 333 to 335 form a G5 region; that stretch reads SAK.

Belongs to the TRAFAC class translation factor GTPase superfamily. Classic translation factor GTPase family. IF-2 subfamily.

The protein resides in the cytoplasm. In terms of biological role, one of the essential components for the initiation of protein synthesis. Protects formylmethionyl-tRNA from spontaneous hydrolysis and promotes its binding to the 30S ribosomal subunits. Also involved in the hydrolysis of GTP during the formation of the 70S ribosomal complex. This Thermosipho africanus (strain TCF52B) protein is Translation initiation factor IF-2.